A 253-amino-acid polypeptide reads, in one-letter code: Adapter protein MecA (253 aa).

Belongs to the MecA family. Homodimer.

In terms of biological role, enables the recognition and targeting of unfolded and aggregated proteins to the ClpC protease or to other proteins involved in proteolysis. The sequence is that of Adapter protein MecA from Streptococcus pyogenes serotype M18 (strain MGAS8232).